A 343-amino-acid polypeptide reads, in one-letter code: Anthranilate phosphoribosyltransferase (343 aa).

5-phospho-alpha-D-ribose 1-diphosphate-binding positions include glycine 84, glycine 87–aspartate 88, threonine 92, asparagine 94–threonine 97, lysine 112–serine 120, and serine 124. Glycine 84 contributes to the anthranilate binding site. Serine 96 contacts Mg(2+). Asparagine 115 contacts anthranilate. Position 170 (arginine 170) interacts with anthranilate. Residues aspartate 229 and glutamate 230 each contribute to the Mg(2+) site.

The protein belongs to the anthranilate phosphoribosyltransferase family. As to quaternary structure, homodimer. Requires Mg(2+) as cofactor.

The enzyme catalyses N-(5-phospho-beta-D-ribosyl)anthranilate + diphosphate = 5-phospho-alpha-D-ribose 1-diphosphate + anthranilate. Its pathway is amino-acid biosynthesis; L-tryptophan biosynthesis; L-tryptophan from chorismate: step 2/5. Functionally, catalyzes the transfer of the phosphoribosyl group of 5-phosphorylribose-1-pyrophosphate (PRPP) to anthranilate to yield N-(5'-phosphoribosyl)-anthranilate (PRA). The polypeptide is Anthranilate phosphoribosyltransferase (Burkholderia vietnamiensis (strain G4 / LMG 22486) (Burkholderia cepacia (strain R1808))).